Here is a 345-residue protein sequence, read N- to C-terminus: Biotin synthase (345 aa).

Positions 60–287 (NQVQLSTLLS…RTMVRLSAGR (228 aa)) constitute a Radical SAM core domain. [4Fe-4S] cluster is bound by residues Cys-75, Cys-79, and Cys-82. Residues Cys-119, Cys-150, Cys-210, and Arg-282 each coordinate [2Fe-2S] cluster.

The protein belongs to the radical SAM superfamily. Biotin synthase family. As to quaternary structure, homodimer. It depends on [4Fe-4S] cluster as a cofactor. Requires [2Fe-2S] cluster as cofactor.

It catalyses the reaction (4R,5S)-dethiobiotin + (sulfur carrier)-SH + 2 reduced [2Fe-2S]-[ferredoxin] + 2 S-adenosyl-L-methionine = (sulfur carrier)-H + biotin + 2 5'-deoxyadenosine + 2 L-methionine + 2 oxidized [2Fe-2S]-[ferredoxin]. The protein operates within cofactor biosynthesis; biotin biosynthesis; biotin from 7,8-diaminononanoate: step 2/2. In terms of biological role, catalyzes the conversion of dethiobiotin (DTB) to biotin by the insertion of a sulfur atom into dethiobiotin via a radical-based mechanism. The protein is Biotin synthase of Polaromonas naphthalenivorans (strain CJ2).